Here is a 166-residue protein sequence, read N- to C-terminus: MFPMVTQFMNYGQQTVRAARYIGQGLIITLSHANRLPVTIQYPYEKLITSERFRGRIHFEFDKCIACEVCVRVCPIDLPVVDWKLETDIRKKRLLNYSIDFGICIFCGNCVEYCPTNCLSMTEEYELSTYDRHELNYNQIALGRLPMSIIDDYTIRTILNLPEIKT.

4Fe-4S ferredoxin-type domains are found at residues 55-84 (GRIH…VDWK) and 95-124 (LNYS…MTEE). Residues cysteine 64, cysteine 67, cysteine 70, cysteine 74, cysteine 104, cysteine 107, cysteine 110, and cysteine 114 each contribute to the [4Fe-4S] cluster site.

The protein belongs to the complex I 23 kDa subunit family. In terms of assembly, NDH is composed of at least 16 different subunits, 5 of which are encoded in the nucleus. [4Fe-4S] cluster serves as cofactor.

It localises to the plastid. The protein localises to the chloroplast thylakoid membrane. The enzyme catalyses a plastoquinone + NADH + (n+1) H(+)(in) = a plastoquinol + NAD(+) + n H(+)(out). It catalyses the reaction a plastoquinone + NADPH + (n+1) H(+)(in) = a plastoquinol + NADP(+) + n H(+)(out). NDH shuttles electrons from NAD(P)H:plastoquinone, via FMN and iron-sulfur (Fe-S) centers, to quinones in the photosynthetic chain and possibly in a chloroplast respiratory chain. The immediate electron acceptor for the enzyme in this species is believed to be plastoquinone. Couples the redox reaction to proton translocation, and thus conserves the redox energy in a proton gradient. This chain is NAD(P)H-quinone oxidoreductase subunit I, chloroplastic, found in Hulsea algida (Pacific hulsea).